Consider the following 117-residue polypeptide: Large ribosomal subunit protein bL19 (117 aa).

This sequence belongs to the bacterial ribosomal protein bL19 family.

This protein is located at the 30S-50S ribosomal subunit interface and may play a role in the structure and function of the aminoacyl-tRNA binding site. This Mycoplasmopsis pulmonis (strain UAB CTIP) (Mycoplasma pulmonis) protein is Large ribosomal subunit protein bL19.